A 370-amino-acid polypeptide reads, in one-letter code: MPDSTFLDSTELVLNMGPQHPSTHGVLRVILKLDGEKVLGTDCIIGYLHRGVEKIAENRTYAQFNPYVDRMDYVAAVSNGLGYCLAIEKLLNVEAPPRAQCIRVILTELNRIASHLLWLGTHALDIGAITPVFYCLREREEALKIFEKYCGARLTTHAFRIGGLLYETYDGFEQEIRDFCKMFIPKVDEYEELLTNNRIWVGRLKDVGILSADECKEFGVTGPVLRAAGVKWDLRKAQPYSGYEKYDFEIPTRVNGDTYDRYIVRMEEMRQSVRIMQQAVDGIPEGPIMGKVGKVIKPPIGEAYVSIEAPKGELGYYAVSDGSTQPYRIRVRPPSFVNLQALDRMIRGGLIADVVAVIGTLDIVLGEIDR.

It belongs to the complex I 49 kDa subunit family. NDH-1 is composed of 14 different subunits. Subunits NuoB, C, D, E, F, and G constitute the peripheral sector of the complex.

The protein resides in the cell inner membrane. It catalyses the reaction a quinone + NADH + 5 H(+)(in) = a quinol + NAD(+) + 4 H(+)(out). NDH-1 shuttles electrons from NADH, via FMN and iron-sulfur (Fe-S) centers, to quinones in the respiratory chain. The immediate electron acceptor for the enzyme in this species is believed to be ubiquinone. Couples the redox reaction to proton translocation (for every two electrons transferred, four hydrogen ions are translocated across the cytoplasmic membrane), and thus conserves the redox energy in a proton gradient. This is NADH-quinone oxidoreductase subunit D 2 from Solibacter usitatus (strain Ellin6076).